A 183-amino-acid chain; its full sequence is NADH-quinone oxidoreductase subunit B 2 (183 aa).

Positions 47, 48, 113, and 142 each coordinate [4Fe-4S] cluster.

Belongs to the complex I 20 kDa subunit family. As to quaternary structure, NDH-1 is composed of 14 different subunits. Subunits NuoB, C, D, E, F, and G constitute the peripheral sector of the complex. The cofactor is [4Fe-4S] cluster.

The protein resides in the cell inner membrane. The enzyme catalyses a quinone + NADH + 5 H(+)(in) = a quinol + NAD(+) + 4 H(+)(out). Its function is as follows. NDH-1 shuttles electrons from NADH, via FMN and iron-sulfur (Fe-S) centers, to quinones in the respiratory chain. The immediate electron acceptor for the enzyme in this species is believed to be ubiquinone. Couples the redox reaction to proton translocation (for every two electrons transferred, four hydrogen ions are translocated across the cytoplasmic membrane), and thus conserves the redox energy in a proton gradient. The chain is NADH-quinone oxidoreductase subunit B 2 from Anaeromyxobacter sp. (strain Fw109-5).